Here is a 507-residue protein sequence, read N- to C-terminus: Sugar transport protein 8 (507 aa).

Topologically, residues 1–21 (MAVVISSNGNSKSFDAKMTVY) are cytoplasmic. 12 helical membrane-spanning segments follow: residues 22-42 (VFIC…DIGI), 79-99 (FLQL…FFAS), 116-136 (IFFL…MLII), 139-159 (ILLG…LSEI), 166-186 (GGLN…ANIV), 200-220 (IALG…LLIC), 281-301 (FVIG…AIMF), 319-339 (LSAV…IFLV), 346-366 (FLLL…GIIL), 382-402 (LVVV…WGPL), 419-439 (GFAL…QAFL), and 448-468 (GIFF…LFFV). Residues 469–507 (PETKGVSIDDMRDSVWKLHWYWKRFMLEEDEHDVEKRTD) lie on the Cytoplasmic side of the membrane.

Belongs to the major facilitator superfamily. Sugar transporter (TC 2.A.1.1) family.

The protein localises to the membrane. In terms of biological role, mediates an active uptake of hexoses, probably by sugar/hydrogen symport. The chain is Sugar transport protein 8 (STP8) from Arabidopsis thaliana (Mouse-ear cress).